Consider the following 142-residue polypeptide: MRGILVALTAALIFCSLTPAQPVLHIQETNRAKNRANRKLVARQPEYKAVETLEKNVNIAIAVGTALVTLVSAGVGGMLLSDHLACKSVAKQEEIMQKSWDSMHPDGFTPAGDQMRPVSFDCSTQERGLKPLQSYTNGAEMY.

The N-terminal stretch at methionine 1 to alanine 20 is a signal peptide. A helical transmembrane segment spans residues isoleucine 59 to leucine 79.

In terms of assembly, monomer.

The protein localises to the membrane. Functionally, during infection, may play a role in establishing and maintaining biotrophy; the formation of a tight interaction zone between the host and the pathogen. The sequence is that of Virulence-associated membrane protein 1 from Mycosarcoma maydis (Corn smut fungus).